The primary structure comprises 383 residues: Succinyl-diaminopimelate desuccinylase (383 aa).

H73 contributes to the Zn(2+) binding site. D75 is a catalytic residue. Residue D107 coordinates Zn(2+). Catalysis depends on E141, which acts as the Proton acceptor. Positions 142, 170, and 356 each coordinate Zn(2+).

The protein belongs to the peptidase M20A family. DapE subfamily. As to quaternary structure, homodimer. Zn(2+) is required as a cofactor. The cofactor is Co(2+).

It carries out the reaction N-succinyl-(2S,6S)-2,6-diaminopimelate + H2O = (2S,6S)-2,6-diaminopimelate + succinate. The protein operates within amino-acid biosynthesis; L-lysine biosynthesis via DAP pathway; LL-2,6-diaminopimelate from (S)-tetrahydrodipicolinate (succinylase route): step 3/3. Its function is as follows. Catalyzes the hydrolysis of N-succinyl-L,L-diaminopimelic acid (SDAP), forming succinate and LL-2,6-diaminopimelate (DAP), an intermediate involved in the bacterial biosynthesis of lysine and meso-diaminopimelic acid, an essential component of bacterial cell walls. The chain is Succinyl-diaminopimelate desuccinylase from Pseudomonas putida (strain W619).